A 179-amino-acid chain; its full sequence is Inner membrane-spanning protein YciB (179 aa).

5 consecutive transmembrane segments (helical) span residues 3–23 (FLFDLFPVILFFVAFKLFGIY), 49–69 (PMQWVSLAIIAVFGGATILLH), 76–96 (WKPTVLYWLFAVTLIGSVIGW), 121–141 (VAWAGFFAVMGVLNLYVAYQF), and 149–169 (FKLFGSMGLMLVFIVAQSIWL).

The protein belongs to the YciB family.

It is found in the cell inner membrane. Plays a role in cell envelope biogenesis, maintenance of cell envelope integrity and membrane homeostasis. This chain is Inner membrane-spanning protein YciB, found in Cupriavidus metallidurans (strain ATCC 43123 / DSM 2839 / NBRC 102507 / CH34) (Ralstonia metallidurans).